The sequence spans 83 residues: Large ribosomal subunit protein bL31 (83 aa).

Belongs to the bacterial ribosomal protein bL31 family. Type A subfamily. As to quaternary structure, part of the 50S ribosomal subunit.

Binds the 23S rRNA. The chain is Large ribosomal subunit protein bL31 from Synechococcus sp. (strain CC9605).